Reading from the N-terminus, the 418-residue chain is MNLKIAIIVICQLVYFTQGDTVPSKPLSVDYQAEFSWDLYKKLYPEFRRNMVISPYSLRKIFVCLHQLTDAKDPATTKFSKQLHKVFKFNPTGQLPDLVRRRYENQREAYAQDQGLNTTTLAVVLGRKKKTTHALNNLPKSCGIFARSLKSGSPKQMTRSLNAAMKNISNGAAQSFLSESDLNRDWDFFVADSWLFKGFWRYQFEEEYTTTCNFYTNAKKKGLMRFMYLEEMLRVGHFPQWNVRAVELPLHRESPFSCVLMMPVAADIEELIESLSHKRFKEIYDNMSASKTTVRLPQFRLRMKLSAKSMLEQLGFDTAFKESVFRVFEKDGAIPLGDAIQKMDLSMAHEGEDLAKTYVDRSLGQQFTAHQPFMFVIFDRKELVPIIVGNVVAAITPKDVGPQSDEKLCDNPPRFNGR.

The first 19 residues, methionine 1 to glycine 19, serve as a signal peptide directing secretion. Residues asparagine 117, asparagine 167, and asparagine 286 are each glycosylated (N-linked (GlcNAc...) asparagine).

This sequence belongs to the serpin family. In terms of assembly, interacts with host coagulation factor X/F10 (activated). In terms of tissue distribution, female salivary gland (at protein level).

The protein resides in the secreted. Functionally, anticoagulant and antithrombotic serpin-type protein inhibiting host coagulation factor Xa (F10). Does not inhibit host uPA/urokinase-type plasminogen activator (PLAU), kallikrein, granzyme B (GZMB), matriptase, elastase, alpha-chymotrypsin, chymase, coagulation factor XIIa (F12), coagulation factor XIa (F11), plasmin (PLG), thrombin (F2), trypsin and cathepsin G (CTSG). Inhibits factor Xa-induced production of pro-inflammatory cytokines, such as MCP-1/CCL2, TNF-alpha/TNF, IL-1beta/IL1B, IL6, IL8/CXCL8 and IL18, in human endothelial cells. Inhibits factor Xa-induced up-regulation of protease-activated receptors (PARs) F2R, F2RL1 and F2RL2 in human endothelial cells. Prevents activation of host F2RL1 via inhibition of F2RL1 cleavage by host factor Xa. Inhibits factor Xa-induced up-regulation of adhesion molecules ICAM1 and VCAM1 in human endothelial cells. Inhibits factor Xa-induced up-regulation of phosphorylated ERK1/2 in human endothelial cells. Inhibits factor Xa-induced activation of transcription factor NF-kappa-B in human endothelial cells. Reduces factor Xa-induced edema in the host. Reduces factor Xa-induced endothelial permeability in the host. This chain is FXa-directed anticoagulant, found in Aedes albopictus (Asian tiger mosquito).